We begin with the raw amino-acid sequence, 458 residues long: Sulfite exporter TauE/SafE family protein 2 (458 aa).

12 consecutive transmembrane segments (helical) span residues 5–25 (FVPI…EQEP), 53–73 (IELT…SSIS), 74–94 (SAGG…VAGL), 101–121 (SFSA…NLFV), 128–148 (GKTL…LLGV), 150–170 (IGVI…FAVF), 227–247 (FPWI…AVYL), 267–287 (YWLI…WICF), 324–344 (VMAL…GMLI), 348–368 (LLQV…MVLF), 386–406 (GTAS…LKVV), and 418–438 (IIVF…TSYG).

It belongs to the 4-toluene sulfonate uptake permease (TSUP) (TC 2.A.102) family.

The protein localises to the membrane. This is Sulfite exporter TauE/SafE family protein 2 from Arabidopsis thaliana (Mouse-ear cress).